The sequence spans 253 residues: Tryptophan synthase alpha chain (253 aa).

Residues glutamate 45 and aspartate 56 each act as proton acceptor in the active site.

This sequence belongs to the TrpA family. As to quaternary structure, tetramer of two alpha and two beta chains.

It carries out the reaction (1S,2R)-1-C-(indol-3-yl)glycerol 3-phosphate + L-serine = D-glyceraldehyde 3-phosphate + L-tryptophan + H2O. The protein operates within amino-acid biosynthesis; L-tryptophan biosynthesis; L-tryptophan from chorismate: step 5/5. In terms of biological role, the alpha subunit is responsible for the aldol cleavage of indoleglycerol phosphate to indole and glyceraldehyde 3-phosphate. The protein is Tryptophan synthase alpha chain of Flavobacterium johnsoniae (strain ATCC 17061 / DSM 2064 / JCM 8514 / BCRC 14874 / CCUG 350202 / NBRC 14942 / NCIMB 11054 / UW101) (Cytophaga johnsonae).